The primary structure comprises 468 residues: Ribulose bisphosphate carboxylase large chain (468 aa).

Residue K5 is modified to N6,N6,N6-trimethyllysine. The substrate site is built by N114 and T164. K166 serves as the catalytic Proton acceptor. Position 168 (K168) interacts with substrate. Residues K192, D194, and E195 each contribute to the Mg(2+) site. K192 is subject to N6-carboxylysine. Residue H285 is the Proton acceptor of the active site. 3 residues coordinate substrate: R286, H318, and S370.

It belongs to the RuBisCO large chain family. Type I subfamily. In terms of assembly, heterohexadecamer of 8 large chains and 8 small chains; disulfide-linked. The disulfide link is formed within the large subunit homodimers. Mg(2+) serves as cofactor. In terms of processing, the disulfide bond which can form in the large chain dimeric partners within the hexadecamer appears to be associated with oxidative stress and protein turnover.

It localises to the plastid. The protein localises to the chloroplast. The catalysed reaction is 2 (2R)-3-phosphoglycerate + 2 H(+) = D-ribulose 1,5-bisphosphate + CO2 + H2O. It catalyses the reaction D-ribulose 1,5-bisphosphate + O2 = 2-phosphoglycolate + (2R)-3-phosphoglycerate + 2 H(+). In terms of biological role, ruBisCO catalyzes two reactions: the carboxylation of D-ribulose 1,5-bisphosphate, the primary event in carbon dioxide fixation, as well as the oxidative fragmentation of the pentose substrate in the photorespiration process. Both reactions occur simultaneously and in competition at the same active site. This is Ribulose bisphosphate carboxylase large chain from Salvia divinorum (Maria pastora).